Consider the following 205-residue polypeptide: GTP cyclohydrolase-2 (205 aa).

Position 49–53 (49–53) interacts with GTP; the sequence is RIHSE. Positions 54, 65, and 67 each coordinate Zn(2+). Residues Q70, 92-94, and T114 each bind GTP; that span reads EGR. D126 acts as the Proton acceptor in catalysis. Catalysis depends on R128, which acts as the Nucleophile. GTP is bound by residues T149 and K154.

It belongs to the GTP cyclohydrolase II family. The cofactor is Zn(2+).

The enzyme catalyses GTP + 4 H2O = 2,5-diamino-6-hydroxy-4-(5-phosphoribosylamino)-pyrimidine + formate + 2 phosphate + 3 H(+). The protein operates within cofactor biosynthesis; riboflavin biosynthesis; 5-amino-6-(D-ribitylamino)uracil from GTP: step 1/4. Its function is as follows. Catalyzes the conversion of GTP to 2,5-diamino-6-ribosylamino-4(3H)-pyrimidinone 5'-phosphate (DARP), formate and pyrophosphate. The sequence is that of GTP cyclohydrolase-2 from Shewanella denitrificans (strain OS217 / ATCC BAA-1090 / DSM 15013).